A 259-amino-acid chain; its full sequence is 14-3-3-like protein GF14 omega (259 aa).

Phosphoserine occurs at positions 67, 109, and 190. A Phosphothreonine modification is found at threonine 211.

This sequence belongs to the 14-3-3 family. As to quaternary structure, interacts with CINV1.

The protein localises to the nucleus. It localises to the cytoplasm. Functionally, is associated with a DNA binding complex that binds to the G box, a well-characterized cis-acting DNA regulatory element found in plant genes. In Arabidopsis thaliana (Mouse-ear cress), this protein is 14-3-3-like protein GF14 omega (GRF2).